The primary structure comprises 589 residues: ATP-dependent lipid A-core flippase (589 aa).

Transmembrane regions (helical) follow at residues 29 to 49 (WLLV…STFL), 68 to 88 (ALWL…AGYI), 157 to 177 (VIGA…AILL), 254 to 274 (LSSA…LLIA), and 283 to 303 (LSPG…PALK). In terms of domain architecture, ABC transmembrane type-1 spans 32–314 (VVAACGALLE…LTNVQNMLQS (283 aa)). Positions 346–582 (IEFRGITARY…DGLYAYLYSM (237 aa)) constitute an ABC transporter domain. Residue 380–387 (GRSGSGKS) coordinates ATP.

This sequence belongs to the ABC transporter superfamily. Lipid exporter (TC 3.A.1.106) family. Homodimer.

Its subcellular location is the cell inner membrane. The enzyme catalyses ATP + H2O + lipid A-core oligosaccharideSide 1 = ADP + phosphate + lipid A-core oligosaccharideSide 2.. Functionally, involved in lipopolysaccharide (LPS) biosynthesis. Translocates lipid A-core from the inner to the outer leaflet of the inner membrane. Transmembrane domains (TMD) form a pore in the inner membrane and the ATP-binding domain (NBD) is responsible for energy generation. This Xylella fastidiosa (strain 9a5c) protein is ATP-dependent lipid A-core flippase.